Reading from the N-terminus, the 569-residue chain is Falcipain-1 (569 aa).

At Met-1–Thr-35 the chain is on the cytoplasmic side. A propeptide spans Met-1–Lys-332 (activation peptide). Residues Phe-36–Phe-56 traverse the membrane as a helical; Signal-anchor for type II membrane protein segment. Residues Thr-57 to Leu-569 lie on the Lumenal side of the membrane. N-linked (GlcNAc...) asparagine glycans are attached at residues Asn-58, Asn-98, Asn-121, and Asn-127. Positions Leu-97–Asn-118 are disordered. Cystine bridges form between Cys-354–Cys-395, Cys-388–Cys-428, and Cys-413–Cys-433. Cys-357 is an active-site residue. Asn-479 and Asn-487 each carry an N-linked (GlcNAc...) asparagine glycan. Cys-482 and Cys-558 are oxidised to a cystine. Residues His-488 and Asn-533 contribute to the active site.

It belongs to the peptidase C1 family. Contains disulfide bonds.

The protein resides in the membrane. It localises to the cytoplasmic granule. In terms of biological role, cysteine protease. In the mosquito midgut, required for parasite development. In Plasmodium falciparum (isolate 3D7), this protein is Falcipain-1.